Here is a 281-residue protein sequence, read N- to C-terminus: Probable short-chain type dehydrogenase/reductase blr2146 (281 aa).

Position 10 to 34 (10 to 34 (VVTGAGAGIGKACALAIAREGGRVV)) interacts with NAD(+). Residue Ser-146 participates in substrate binding. Tyr-159 acts as the Proton acceptor in catalysis. The interval 261–281 (GNSRAARPAGETAEADAAPRC) is disordered.

Belongs to the short-chain dehydrogenases/reductases (SDR) family.

The protein is Probable short-chain type dehydrogenase/reductase blr2146 of Bradyrhizobium diazoefficiens (strain JCM 10833 / BCRC 13528 / IAM 13628 / NBRC 14792 / USDA 110).